The chain runs to 427 residues: Gamma-glutamyl phosphate reductase (427 aa).

This sequence belongs to the gamma-glutamyl phosphate reductase family.

The protein localises to the cytoplasm. It catalyses the reaction L-glutamate 5-semialdehyde + phosphate + NADP(+) = L-glutamyl 5-phosphate + NADPH + H(+). It participates in amino-acid biosynthesis; L-proline biosynthesis; L-glutamate 5-semialdehyde from L-glutamate: step 2/2. Functionally, catalyzes the NADPH-dependent reduction of L-glutamate 5-phosphate into L-glutamate 5-semialdehyde and phosphate. The product spontaneously undergoes cyclization to form 1-pyrroline-5-carboxylate. In Brucella canis (strain ATCC 23365 / NCTC 10854 / RM-666), this protein is Gamma-glutamyl phosphate reductase.